The chain runs to 344 residues: Eukaryotic translation initiation factor 2 subunit alpha (344 aa).

The 72-residue stretch at 21–92 folds into the S1 motif domain; the sequence is DMAVMIQVKT…ERGYIDLSKR (72 aa). Residue serine 56 is modified to Phosphoserine; by GCN2. The disordered stretch occupies residues 309–344; it reads LRMDNEEMSGDEGSEDEEEDTGMGEVDIDGGSGIIE. Over residues 314–336 the composition is skewed to acidic residues; sequence EEMSGDEGSEDEEEDTGMGEVDI. 2 positions are modified to phosphoserine; by CK2: serine 317 and serine 322.

This sequence belongs to the eIF-2-alpha family. Eukaryotic translation initiation factor 2 eIF2 is a heterotrimeric complex composed of an alpha, a beta and a gamma subunit. Phosphorylated at Ser-56 by GCN2. Phosphorylated at Ser-317 and Ser-322 by CK2.

The protein resides in the cytoplasm. The protein localises to the cytosol. Its function is as follows. Functions in the early steps of protein synthesis by forming a ternary complex with GTP and initiator tRNA. This complex binds to a 40S ribosomal subunit, followed by mRNA binding to form a 43S pre-initiation complex. Junction of the 60S ribosomal subunit to form the 80S initiation complex is preceded by hydrolysis of the GTP bound to eIF-2 and release of an eIF-2-GDP binary complex. In order for eIF-2 to recycle and catalyze another round of initiation, the GDP bound to eIF-2 must exchange with GTP by way of a reaction catalyzed by eIF2B. The protein is Eukaryotic translation initiation factor 2 subunit alpha of Arabidopsis thaliana (Mouse-ear cress).